The sequence spans 62 residues: Omega-conotoxin-like Bu11 (62 aa).

The first 7 residues, 1–7 (ACQLITA), serve as a signal peptide directing secretion. Positions 8–27 (EDSRGTQLHRALRSTSKVSK) are excised as a propeptide. 3 disulfides stabilise this stretch: Cys-31/Cys-46, Cys-38/Cys-49, and Cys-45/Cys-56.

This sequence belongs to the conotoxin O1 superfamily. Expressed by the venom duct.

It is found in the secreted. In terms of biological role, omega-conotoxins act at presynaptic membranes, they bind and block voltage-gated calcium channels (Cav). The sequence is that of Omega-conotoxin-like Bu11 from Conus bullatus (Bubble cone).